The following is a 388-amino-acid chain: AT-rich binding protein (388 aa).

A C2H2-type 1 zinc finger spans residues isoleucine 29–histidine 52. 2 stretches are compositionally biased toward low complexity: residues glutamine 138–glutamine 165 and valine 249–proline 265. Disordered stretches follow at residues glutamine 138–valine 168 and proline 240–proline 265. 2 C2H2-type zinc fingers span residues tyrosine 321–histidine 345 and phenylalanine 351–histidine 374.

The protein resides in the nucleus. Its function is as follows. May be a transcription factor for genes having (A+T) stretches in their promoter and/or enhancer regions. Binds to AT rich DNA. This Drosophila melanogaster (Fruit fly) protein is AT-rich binding protein.